The primary structure comprises 338 residues: Eukaryotic translation initiation factor 3 subunit H (338 aa).

One can recognise an MPN domain in the interval 22 to 154; that stretch reads VQCDGLAVMK…LKAYRLTPQA (133 aa).

It belongs to the eIF-3 subunit H family. As to quaternary structure, component of the eukaryotic translation initiation factor 3 (eIF-3) complex. The eIF-3 complex interacts with pix. Interacts with mxt.

The protein resides in the cytoplasm. In terms of biological role, component of the eukaryotic translation initiation factor 3 (eIF-3) complex, which is involved in protein synthesis of a specialized repertoire of mRNAs and, together with other initiation factors, stimulates binding of mRNA and methionyl-tRNAi to the 40S ribosome. The eIF-3 complex specifically targets and initiates translation of a subset of mRNAs involved in cell proliferation. The chain is Eukaryotic translation initiation factor 3 subunit H from Drosophila yakuba (Fruit fly).